The primary structure comprises 422 residues: Serine--tRNA ligase (422 aa).

229–231 (TAE) provides a ligand contact to L-serine. Residue 260-262 (RAE) participates in ATP binding. Glutamate 283 is an L-serine binding site. ATP is bound at residue 347-350 (EISS). Serine 383 lines the L-serine pocket.

It belongs to the class-II aminoacyl-tRNA synthetase family. Type-1 seryl-tRNA synthetase subfamily. Homodimer. The tRNA molecule binds across the dimer.

Its subcellular location is the cytoplasm. It catalyses the reaction tRNA(Ser) + L-serine + ATP = L-seryl-tRNA(Ser) + AMP + diphosphate + H(+). The catalysed reaction is tRNA(Sec) + L-serine + ATP = L-seryl-tRNA(Sec) + AMP + diphosphate + H(+). Its pathway is aminoacyl-tRNA biosynthesis; selenocysteinyl-tRNA(Sec) biosynthesis; L-seryl-tRNA(Sec) from L-serine and tRNA(Sec): step 1/1. Catalyzes the attachment of serine to tRNA(Ser). Is also able to aminoacylate tRNA(Sec) with serine, to form the misacylated tRNA L-seryl-tRNA(Sec), which will be further converted into selenocysteinyl-tRNA(Sec). This is Serine--tRNA ligase from Heliobacterium modesticaldum (strain ATCC 51547 / Ice1).